Consider the following 339-residue polypeptide: UDP-N-acetylenolpyruvoylglucosamine reductase (339 aa).

The 172-residue stretch at 18 to 189 (GVEVKAKWFA…LRVRFALNRV (172 aa)) folds into the FAD-binding PCMH-type domain. R166 is an active-site residue. Catalysis depends on S239, which acts as the Proton donor. E335 is an active-site residue.

Belongs to the MurB family. FAD serves as cofactor.

Its subcellular location is the cytoplasm. It carries out the reaction UDP-N-acetyl-alpha-D-muramate + NADP(+) = UDP-N-acetyl-3-O-(1-carboxyvinyl)-alpha-D-glucosamine + NADPH + H(+). The protein operates within cell wall biogenesis; peptidoglycan biosynthesis. Its function is as follows. Cell wall formation. This Pseudomonas fluorescens (strain ATCC BAA-477 / NRRL B-23932 / Pf-5) protein is UDP-N-acetylenolpyruvoylglucosamine reductase.